The chain runs to 352 residues: Phosphoribosylformylglycinamidine cyclo-ligase (352 aa).

Belongs to the AIR synthase family.

It is found in the cytoplasm. The catalysed reaction is 2-formamido-N(1)-(5-O-phospho-beta-D-ribosyl)acetamidine + ATP = 5-amino-1-(5-phospho-beta-D-ribosyl)imidazole + ADP + phosphate + H(+). It functions in the pathway purine metabolism; IMP biosynthesis via de novo pathway; 5-amino-1-(5-phospho-D-ribosyl)imidazole from N(2)-formyl-N(1)-(5-phospho-D-ribosyl)glycinamide: step 2/2. This chain is Phosphoribosylformylglycinamidine cyclo-ligase, found in Pseudomonas fluorescens (strain Pf0-1).